The primary structure comprises 161 residues: EP300-interacting inhibitor of differentiation 2B (161 aa).

Disordered stretches follow at residues 1–26 (MAEP…GTAS) and 54–77 (ARSM…GLAS).

Homodimer and heterodimer with EID2. Interacts with HDAC1 and HDAC2.

It localises to the nucleus. Its function is as follows. Acts as a repressor of MYOD-dependent transcription, glucocorticoid receptor-dependent transcription, and muscle differentiation. The chain is EP300-interacting inhibitor of differentiation 2B from Homo sapiens (Human).